A 334-amino-acid polypeptide reads, in one-letter code: N-acetyl-gamma-glutamyl-phosphate reductase (334 aa).

Cysteine 154 is a catalytic residue.

It belongs to the NAGSA dehydrogenase family. Type 1 subfamily.

It localises to the cytoplasm. It carries out the reaction N-acetyl-L-glutamate 5-semialdehyde + phosphate + NADP(+) = N-acetyl-L-glutamyl 5-phosphate + NADPH + H(+). It functions in the pathway amino-acid biosynthesis; L-arginine biosynthesis; N(2)-acetyl-L-ornithine from L-glutamate: step 3/4. Its function is as follows. Catalyzes the NADPH-dependent reduction of N-acetyl-5-glutamyl phosphate to yield N-acetyl-L-glutamate 5-semialdehyde. The sequence is that of N-acetyl-gamma-glutamyl-phosphate reductase from Buchnera aphidicola subsp. Acyrthosiphon pisum (strain Tuc7).